Consider the following 800-residue polypeptide: DNA topoisomerase 4 subunit A (800 aa).

The 465-residue stretch at 31-495 (LPDVRDGLKP…EIEEIKIDKE (465 aa)) folds into the Topo IIA-type catalytic domain. Tyrosine 119 acts as the O-(5'-phospho-DNA)-tyrosine intermediate in catalysis.

Belongs to the type II topoisomerase GyrA/ParC subunit family. ParC type 2 subfamily. Heterotetramer composed of ParC and ParE.

It is found in the cell membrane. The enzyme catalyses ATP-dependent breakage, passage and rejoining of double-stranded DNA.. Topoisomerase IV is essential for chromosome segregation. It relaxes supercoiled DNA. Performs the decatenation events required during the replication of a circular DNA molecule. This is DNA topoisomerase 4 subunit A from Staphylococcus aureus (strain MW2).